The sequence spans 347 residues: Quinolinate synthase (347 aa).

Residues His47 and Ser68 each contribute to the iminosuccinate site. Cys113 is a binding site for [4Fe-4S] cluster. Residues 139 to 141 and Ser156 each bind iminosuccinate; that span reads YAN. Position 200 (Cys200) interacts with [4Fe-4S] cluster. Residues 226–228 and Thr243 each bind iminosuccinate; that span reads HPE. Residue Cys297 participates in [4Fe-4S] cluster binding.

This sequence belongs to the quinolinate synthase family. Type 1 subfamily. The cofactor is [4Fe-4S] cluster.

It is found in the cytoplasm. It carries out the reaction iminosuccinate + dihydroxyacetone phosphate = quinolinate + phosphate + 2 H2O + H(+). It participates in cofactor biosynthesis; NAD(+) biosynthesis; quinolinate from iminoaspartate: step 1/1. In terms of biological role, catalyzes the condensation of iminoaspartate with dihydroxyacetone phosphate to form quinolinate. In Salmonella agona (strain SL483), this protein is Quinolinate synthase.